The primary structure comprises 210 residues: ER membrane protein complex subunit 8 (210 aa).

Positions 4–150 constitute an MPN domain; that stretch reads VKLTTQAYCK…IHVYEHHENR (147 aa).

The protein belongs to the EMC8/EMC9 family. In terms of assembly, component of the ER membrane protein complex (EMC). EMC8 and EMC9 are mutually exclusive subunits of the EMC complex. As to expression, expressed in liver, pancreas, heart, lung, kidney, brain, skeletal muscle, and placenta. Expression levels are highest in pancreas and moderate in heart, skeletal muscle, and placenta.

The protein resides in the endoplasmic reticulum membrane. Functionally, part of the endoplasmic reticulum membrane protein complex (EMC) that enables the energy-independent insertion into endoplasmic reticulum membranes of newly synthesized membrane proteins. Preferentially accommodates proteins with transmembrane domains that are weakly hydrophobic or contain destabilizing features such as charged and aromatic residues. Involved in the cotranslational insertion of multi-pass membrane proteins in which stop-transfer membrane-anchor sequences become ER membrane spanning helices. It is also required for the post-translational insertion of tail-anchored/TA proteins in endoplasmic reticulum membranes. By mediating the proper cotranslational insertion of N-terminal transmembrane domains in an N-exo topology, with translocated N-terminus in the lumen of the ER, controls the topology of multi-pass membrane proteins like the G protein-coupled receptors. By regulating the insertion of various proteins in membranes, it is indirectly involved in many cellular processes. The chain is ER membrane protein complex subunit 8 (EMC8) from Homo sapiens (Human).